Here is a 196-residue protein sequence, read N- to C-terminus: SPRY domain-containing protein 7 (196 aa).

One can recognise a B30.2/SPRY domain in the interval methionine 1–proline 184.

The polypeptide is SPRY domain-containing protein 7 (SPRYD7) (Gallus gallus (Chicken)).